A 157-amino-acid polypeptide reads, in one-letter code: Cyclic pyranopterin monophosphate synthase (157 aa).

Substrate contacts are provided by residues 73-75 and 110-111; these read LCH and ME. D125 is a catalytic residue.

It belongs to the MoaC family. Homohexamer; trimer of dimers.

The catalysed reaction is (8S)-3',8-cyclo-7,8-dihydroguanosine 5'-triphosphate = cyclic pyranopterin phosphate + diphosphate. Its pathway is cofactor biosynthesis; molybdopterin biosynthesis. Its function is as follows. Catalyzes the conversion of (8S)-3',8-cyclo-7,8-dihydroguanosine 5'-triphosphate to cyclic pyranopterin monophosphate (cPMP). This chain is Cyclic pyranopterin monophosphate synthase, found in Pseudomonas fluorescens (strain SBW25).